Consider the following 1043-residue polypeptide: Glutamate receptor ionotropic, NMDA 3B (1043 aa).

Positions 1-22 are cleaved as a signal peptide; sequence MEFVRALWLGLALALGPGSAGG. Residues 23-574 are Extracellular-facing; it reads HPQPCGVLAR…PIGAFMWPLH (552 aa). N-linked (GlcNAc...) asparagine glycans are attached at residues Asn69, Asn344, Asn451, and Asn465. Disulfide bonds link Cys439–Cys475 and Cys445–Cys476. The glycine site is built by Ser531, Ser533, and Arg538. 2 residues coordinate D-serine: Ser533 and Arg538. The chain crosses the membrane as a helical span at residues 575-594; that stretch reads WSTWLGVFAALHLTALFLTV. Residues 595–615 are Cytoplasmic-facing; that stretch reads YEWRSPYGLTPRGRNRSTVFS. Residues 616–627 constitute an intramembrane region (discontinuously helical); sequence YSSALNLCYAIL. Over 628 to 641 the chain is Cytoplasmic; the sequence is FRRTVSSKTPKCPT. The helical transmembrane segment at 642 to 661 threads the bilayer; the sequence is GRLLMNLWAIFCLLVLSSYT. The Extracellular segment spans residues 662–832; the sequence is ANLAAVMVGD…TLQMSIYHFA (171 aa). Ser701 is a glycine binding site. D-serine is bound by residues Ser701, Ala702, and Asp745. Glycine is bound at residue Asp745. An N-linked (GlcNAc...) asparagine glycan is attached at Asn786. The chain crosses the membrane as a helical span at residues 833–848; it reads GLFVLLCLGLGSALLS. Topologically, residues 849–1043 are cytoplasmic; that stretch reads SLGEHAFFRL…PHSGRPGSQE (195 aa). Disordered stretches follow at residues 882 to 924 and 1012 to 1043; these read ALNT…WKRA and GDSARHRPRRLLQARAAPAEAPPHSGRPGSQE. The tract at residues 979–1012 is involved in the trafficking and surface expression of NMDARs; it reads QPGELQELERRIEVARERLRQALVRRGQLLAQLG. Residues 1024-1035 are compositionally biased toward low complexity; that stretch reads QARAAPAEAPPH.

It belongs to the glutamate-gated ion channel (TC 1.A.10.1) family. NR3B/GRIN3B subfamily. As to quaternary structure, forms heterotetrameric channels that contain at least two GluN1 subunits and at least a combination of one GluN2 and one GluN3 subunits (in vitro). Forms heterotetrameric channels composed of two GluN1/zeta subunits (GRIN1), and two identical GluN3 subunits (GRIN3A or GRIN3B) (in vitro). Does not form functional homomeric channels.

The protein resides in the cell membrane. It localises to the postsynaptic cell membrane. It catalyses the reaction Ca(2+)(in) = Ca(2+)(out). The catalysed reaction is Na(+)(in) = Na(+)(out). Component of a non-conventional N-methyl-D-aspartate (NMDA) receptors (NMDARs) that function as heterotetrameric, ligand-gated cation channels with low calcium permeability and low voltage-dependent block by Mg(2+). Forms glutamatergic receptor complexes with GluN1 and GluN2 subunits which are activated by glycine binding to the GluN1 and GluN3 subunits and L-glutamate binding to GluN2 subunits. Forms excitatory glycinergic receptor complexes with GluN1 alone which are activated by glycine binding to the GluN1 and GluN3 subunits. GluN3B subunit also binds D-serine and, in the absence of glycine, activates glycinergic receptor complexes, but with lower efficacy than glycine. Each GluN3 subunit confers differential attributes to channel properties, including activation, deactivation and desensitization kinetics, pH sensitivity, Ca2(+) permeability, and binding to allosteric modulators. The polypeptide is Glutamate receptor ionotropic, NMDA 3B (Homo sapiens (Human)).